Reading from the N-terminus, the 30-residue chain is GIPCAESCVYIPCTVTALLGCSCSDKVCYN.

Positions 1–30 (GIPCAESCVYIPCTVTALLGCSCSDKVCYN) form a cross-link, cyclopeptide (Gly-Asn). Cystine bridges form between Cys4–Cys21, Cys8–Cys23, and Cys13–Cys28.

In terms of processing, this is a cyclic peptide. In terms of tissue distribution, detected in stems (at protein level).

Probably participates in a plant defense mechanism. Has cytotoxic activity against HUVEC cells (LC(50)= 2.26 uM) and various cancer cells including HeLa (LC(50)= 3.48 uM), MCF-7 and K562. Displays very weak hemolytic activity. Binds to and induces leakage in phospholipd membranes, particularly ones containing 1-palmitoyl-2-oleophosphatidylethanolamine (POPE). This is Cyclotide hyen-L from Pigea enneasperma (Spade flower).